Here is a 37-residue protein sequence, read N- to C-terminus: Photosystem I reaction center subunit VIII (37 aa).

Residues 7–27 (LPSFFVPLVGLVFPAIAMASL) traverse the membrane as a helical segment.

This sequence belongs to the PsaI family.

It localises to the plastid. The protein localises to the chloroplast thylakoid membrane. Its function is as follows. May help in the organization of the PsaL subunit. This chain is Photosystem I reaction center subunit VIII, found in Eucalyptus globulus subsp. globulus (Tasmanian blue gum).